The chain runs to 165 residues: uncharacterized protein (165 aa).

The helical transmembrane segment at 16 to 36 (ASISSILNFFFFYIMEYFVAV) threads the bilayer.

This sequence belongs to the asfivirus F165R family.

The protein resides in the host membrane. This is an uncharacterized protein from African swine fever virus (strain Badajoz 1971 Vero-adapted) (Ba71V).